The primary structure comprises 380 residues: MTIIRKKHPLIKIINHSFIDLPAPSNISSWWNFGSLLGLCLIIQILTGLFLAMHYTSDTSTAFSSVAHICRDVNYGWLIRYMHANGASMFFICLFLHVGRGIYYGSYNMIETWNMGIILLFAVMATAFMGYVLPWGQMSFWGATVITNLLSAIPYIGTTLVEWIWGGFSVDKATLTRFFAFHFILPFIITALVLVHLLFLHETGSNNPTGLNSDADKIPFHPYYTIKDFLGVLVLLMAFMILVLFFPDILGDPDNYTPANPLNTPPHIKPEWYFLFAYAILRSIPNKLGGVLALILSILILALMPLLHTSKQRALTFRPITQTMYWILVADLLILTWIGGQPVEYPFIMIGQAASIAYFAIIVIFMPIAGMIENNILDLD.

4 consecutive transmembrane segments (helical) span residues 33–53, 77–98, 113–133, and 178–198; these read FGSL…FLAM, WLIR…FLHV, WNMG…GYVL, and FFAF…VHLL. The heme b site is built by H83 and H97. Residues H182 and H196 each contribute to the heme b site. Residue H201 coordinates a ubiquinone. The next 4 membrane-spanning stretches (helical) occupy residues 226-246, 288-308, 320-340, and 347-367; these read IKDF…VLFF, LGGV…PLLH, ITQT…WIGG, and FIMI…IFMP.

The protein belongs to the cytochrome b family. As to quaternary structure, the cytochrome bc1 complex contains 11 subunits: 3 respiratory subunits (MT-CYB, CYC1 and UQCRFS1), 2 core proteins (UQCRC1 and UQCRC2) and 6 low-molecular weight proteins (UQCRH/QCR6, UQCRB/QCR7, UQCRQ/QCR8, UQCR10/QCR9, UQCR11/QCR10 and a cleavage product of UQCRFS1). This cytochrome bc1 complex then forms a dimer. The cofactor is heme b.

It is found in the mitochondrion inner membrane. Its function is as follows. Component of the ubiquinol-cytochrome c reductase complex (complex III or cytochrome b-c1 complex) that is part of the mitochondrial respiratory chain. The b-c1 complex mediates electron transfer from ubiquinol to cytochrome c. Contributes to the generation of a proton gradient across the mitochondrial membrane that is then used for ATP synthesis. The polypeptide is Cytochrome b (MT-CYB) (Chionomys roberti (Robert's snow vole)).